The primary structure comprises 85 residues: Large ribosomal subunit protein bL27 (85 aa).

A disordered region spans residues 1 to 21 (MAHKKAGGSTRNGRDSESKRL).

This sequence belongs to the bacterial ribosomal protein bL27 family.

This chain is Large ribosomal subunit protein bL27, found in Photorhabdus laumondii subsp. laumondii (strain DSM 15139 / CIP 105565 / TT01) (Photorhabdus luminescens subsp. laumondii).